The sequence spans 507 residues: Zinc finger CCCH-type with G patch domain-containing protein (507 aa).

Met1 is subject to N-acetylmethionine. Positions 88–125 are disordered; that stretch reads PVDPGNDSKTVPGSEVQPTPTSSALEEEEEDPDLEDLS. A compositionally biased stretch (polar residues) spans 94 to 111; that stretch reads DSKTVPGSEVQPTPTSSA. Over residues 112 to 123 the composition is skewed to acidic residues; it reads LEEEEEDPDLED. The C3H1-type zinc-finger motif lies at 170–196; it reads KSLKPCPFFLEGKCRFKENCRFSHGQL. Positions 264–283 are disordered; it reads LRTEATDSSDSDTGDASDSS. Phosphoserine is present on Ser272. The residue at position 276 (Thr276) is a Phosphothreonine. The G-patch domain maps to 309–355; sequence TRGIGSKLLVKMGYEFGKGLGRHAEGRVEPIHAVVLPRGKSLDQCAE. Residue Ser349 is modified to Phosphoserine. 2 disordered regions span residues 359-389 and 486-507; these read KKTK…PPRN and AQEA…MTEF. The span at 487–507 shows a compositional bias: basic and acidic residues; that stretch reads QEADLQRKQRKADTHRKMTEF.

As to quaternary structure, interacts with CHD4/Mi-2; the interaction is direct.

Its subcellular location is the nucleus. Its function is as follows. Transcription repressor that specifically binds the 5'-GGAG[GA]A[GA]A-3' consensus sequence. Represses transcription by recruiting the chromatin multiprotein complex NuRD to target promoters. Negatively regulates expression of EGFR, a gene involved in cell proliferation, survival and migration. Its ability to repress genes of the EGFR pathway suggest it may act as a tumor suppressor. The sequence is that of Zinc finger CCCH-type with G patch domain-containing protein (Zgpat) from Rattus norvegicus (Rat).